Here is a 308-residue protein sequence, read N- to C-terminus: MLNSAEGILLCVVTSEAVLGVLGDTYIALFNCMDYAKNKKLSKIGFILIGLAISRIGVVWIIILQGYIQVFFPHMLTSGNITEYITYIWVFLNHLSVWFVTNLNILYFLKIANFSNSVFLWLKRRVNAVFIFLSGCLLTSWLLCFPQMTKILQNSKMHQRNTSWVHQRKNYFLINQSVTNLGIFFFIIVSLITCFLLIVFLWRHVRQMHSDVSGFRDHSTKVHVKAMKFLISFMVFFILHFVGLSIEVLCFILPQNKLLFITGLTATCLYPCGHSIIVILGNKQLKQASLKALQQLKCCETKGNFRVK.

Topologically, residues 1–7 (MLNSAEG) are extracellular. The chain crosses the membrane as a helical span at residues 8–28 (ILLCVVTSEAVLGVLGDTYIA). Topologically, residues 29-43 (LFNCMDYAKNKKLSK) are cytoplasmic. The chain crosses the membrane as a helical span at residues 44–64 (IGFILIGLAISRIGVVWIIIL). Residues 65–87 (QGYIQVFFPHMLTSGNITEYITY) are Extracellular-facing. N-linked (GlcNAc...) asparagine glycosylation occurs at asparagine 80. The chain crosses the membrane as a helical span at residues 88–108 (IWVFLNHLSVWFVTNLNILYF). Residues 109–125 (LKIANFSNSVFLWLKRR) are Cytoplasmic-facing. A helical membrane pass occupies residues 126–146 (VNAVFIFLSGCLLTSWLLCFP). Residues 147-180 (QMTKILQNSKMHQRNTSWVHQRKNYFLINQSVTN) are Extracellular-facing. Residues asparagine 161 and asparagine 175 are each glycosylated (N-linked (GlcNAc...) asparagine). Residues 181–201 (LGIFFFIIVSLITCFLLIVFL) traverse the membrane as a helical segment. The Cytoplasmic segment spans residues 202-232 (WRHVRQMHSDVSGFRDHSTKVHVKAMKFLIS). A helical membrane pass occupies residues 233-253 (FMVFFILHFVGLSIEVLCFIL). The Extracellular segment spans residues 254 to 258 (PQNKL). A helical membrane pass occupies residues 259 to 279 (LFITGLTATCLYPCGHSIIVI). The Cytoplasmic portion of the chain corresponds to 280-308 (LGNKQLKQASLKALQQLKCCETKGNFRVK).

This sequence belongs to the G-protein coupled receptor T2R family.

The protein localises to the membrane. Putative taste receptor which may play a role in the perception of bitterness. The polypeptide is Taste receptor type 2 member 107 (Mus musculus (Mouse)).